The chain runs to 166 residues: Phospholipase A2 inhibitor clone 11 (166 aa).

The signal sequence occupies residues 1–19; it reads MRLILLSGLLLLGIFLANG. In terms of domain architecture, C-type lectin spans 46 to 161; it reads LKGSFLIVHK…CDDNLLVVCE (116 aa). Disulfide bonds link C83/C160 and C138/C152. N-linked (GlcNAc...) asparagine glycosylation is present at N122.

This sequence belongs to the alpha-type phospholipase A2 inhibitor family. Homotrimer; non-covalently linked. As to expression, expressed by the liver.

It localises to the secreted. Its function is as follows. This phospholipase A2 inhibitor binds directly phospholipase A2 in the presence or absence of calcium. The protein is Phospholipase A2 inhibitor clone 11 of Bothrops neuwiedi (Neuwied's lancehead).